The following is a 362-amino-acid chain: Mannose-1-phosphate guanyltransferase (362 aa).

Belongs to the transferase hexapeptide repeat family.

It localises to the cytoplasm. It catalyses the reaction alpha-D-mannose 1-phosphate + GTP + H(+) = GDP-alpha-D-mannose + diphosphate. Its pathway is nucleotide-sugar biosynthesis; GDP-alpha-D-mannose biosynthesis; GDP-alpha-D-mannose from alpha-D-mannose 1-phosphate (GTP route): step 1/1. Its function is as follows. Involved in cell wall synthesis where it is required for glycosylation. Involved in cell cycle progression through cell-size checkpoint. The chain is Mannose-1-phosphate guanyltransferase (MPG1) from Debaryomyces hansenii (strain ATCC 36239 / CBS 767 / BCRC 21394 / JCM 1990 / NBRC 0083 / IGC 2968) (Yeast).